Here is a 552-residue protein sequence, read N- to C-terminus: Dihydroxy-acid dehydratase (552 aa).

D78 provides a ligand contact to Mg(2+). A [2Fe-2S] cluster-binding site is contributed by C119. The Mg(2+) site is built by D120 and K121. K121 is modified (N6-carboxylysine). C191 contacts [2Fe-2S] cluster. A Mg(2+)-binding site is contributed by E442. S468 serves as the catalytic Proton acceptor.

This sequence belongs to the IlvD/Edd family. As to quaternary structure, homodimer. The cofactor is [2Fe-2S] cluster. Mg(2+) is required as a cofactor.

It catalyses the reaction (2R)-2,3-dihydroxy-3-methylbutanoate = 3-methyl-2-oxobutanoate + H2O. It carries out the reaction (2R,3R)-2,3-dihydroxy-3-methylpentanoate = (S)-3-methyl-2-oxopentanoate + H2O. The protein operates within amino-acid biosynthesis; L-isoleucine biosynthesis; L-isoleucine from 2-oxobutanoate: step 3/4. It participates in amino-acid biosynthesis; L-valine biosynthesis; L-valine from pyruvate: step 3/4. In terms of biological role, functions in the biosynthesis of branched-chain amino acids. Catalyzes the dehydration of (2R,3R)-2,3-dihydroxy-3-methylpentanoate (2,3-dihydroxy-3-methylvalerate) into 2-oxo-3-methylpentanoate (2-oxo-3-methylvalerate) and of (2R)-2,3-dihydroxy-3-methylbutanoate (2,3-dihydroxyisovalerate) into 2-oxo-3-methylbutanoate (2-oxoisovalerate), the penultimate precursor to L-isoleucine and L-valine, respectively. The sequence is that of Dihydroxy-acid dehydratase from Clostridium botulinum (strain Alaska E43 / Type E3).